A 205-amino-acid chain; its full sequence is MPVVFVAASKLPTPFATFTMNGFLEEATGREHVVLSLGDIADGAPVLGRVHSECLTGDALFSQRCDCGSQLEAAMRAIAREGRGVLLYLRQEGRGIGLMNKIRAYELQDGGADTVEANERLGFAADQRDYAICLPMLEHLGVSSLRLMTNNPRKVKALTEMGITVAERVPLHTGHNPHNKLYLATKASKLDHMMGNEHQGEVDRA.

Residue 49-53 (RVHSE) participates in GTP binding. Residues Cys-54, Cys-65, and Cys-67 each coordinate Zn(2+). GTP is bound by residues Gln-70, 92-94 (EGR), and Thr-114. Catalysis depends on Asp-126, which acts as the Proton acceptor. Catalysis depends on Arg-128, which acts as the Nucleophile. GTP-binding residues include Thr-149 and Lys-154.

It belongs to the GTP cyclohydrolase II family. The cofactor is Zn(2+).

The catalysed reaction is GTP + 4 H2O = 2,5-diamino-6-hydroxy-4-(5-phosphoribosylamino)-pyrimidine + formate + 2 phosphate + 3 H(+). It functions in the pathway cofactor biosynthesis; riboflavin biosynthesis; 5-amino-6-(D-ribitylamino)uracil from GTP: step 1/4. In terms of biological role, catalyzes the conversion of GTP to 2,5-diamino-6-ribosylamino-4(3H)-pyrimidinone 5'-phosphate (DARP), formate and pyrophosphate. This chain is GTP cyclohydrolase-2, found in Pseudomonas fluorescens (strain SBW25).